Here is a 128-residue protein sequence, read N- to C-terminus: Fluoride-specific ion channel FluC (128 aa).

Helical transmembrane passes span leucine 5 to phenylalanine 25, phenylalanine 34 to phenylalanine 54, phenylalanine 67 to valine 87, and phenylalanine 99 to isoleucine 119. Na(+) contacts are provided by glycine 74 and threonine 77.

It belongs to the fluoride channel Fluc/FEX (TC 1.A.43) family.

The protein resides in the cell inner membrane. The catalysed reaction is fluoride(in) = fluoride(out). Its activity is regulated as follows. Na(+) is not transported, but it plays an essential structural role and its presence is essential for fluoride channel function. Functionally, fluoride-specific ion channel. Important for reducing fluoride concentration in the cell, thus reducing its toxicity. The chain is Fluoride-specific ion channel FluC from Haemophilus influenzae (strain PittGG).